The sequence spans 204 residues: MAVKRARGKIVRRLGINIFGNPKYTRLLGKKPAPPGKEHGVKQRAKVSVYGEQLKEKQKFRFAYGMSERQFRNLFAQAHRMKGVTGNNMLSLMERRLDNTVFRMGFAISRVQARQMVSHRYFLINGKTANIPSMRISAHDVITTKNRKGIHSIIRHNLTLSQGQRGSWLNVDEEQLSATVSELPRAQDIHPVGNIQHIVEYYSR.

The S4 RNA-binding domain occupies 95–157; it reads RRLDNTVFRM…KGIHSIIRHN (63 aa).

This sequence belongs to the universal ribosomal protein uS4 family. In terms of assembly, part of the 30S ribosomal subunit. Contacts protein S5. The interaction surface between S4 and S5 is involved in control of translational fidelity.

One of the primary rRNA binding proteins, it binds directly to 16S rRNA where it nucleates assembly of the body of the 30S subunit. Its function is as follows. With S5 and S12 plays an important role in translational accuracy. The polypeptide is Small ribosomal subunit protein uS4 (Treponema pallidum (strain Nichols)).